The chain runs to 366 residues: MKIGVFIPIGNNGWLISSNAPQYQPTFELNKTIVQKAEHYNFDFALSMIKLRGFGGKTEFWDHNLESFTLMAGLAAVTSRIKIYATAATLTMPPAIVARMASTIDSISNGRFGLNVVTGWQKPEYEQMGMWPGDDYFGRRYDYLAEYVNVLRDLWGTGKSDFKGEFFQMDDCRVSPQPQADIKVICAGQSDAGMAFSAKYADYNFCFGKGVNTPTAFAPTAARLKIAADSEGRSVACYVLFMIIADETDEAARAKWESYKAGADTEALAWLTEQSGKDTKSGADTNVRQMADPTSAVNINMGTLVGSYANVARMMDEIATVPGTEGVLLTFDDFITGVENFGERIQPLMKSRADVCPQTAASREVA.

FMN-binding positions include 49–50 (IK), Asn115, Glu124, 140–141 (RY), and Ser190.

The protein belongs to the NtaA/SnaA/DszA monooxygenase family. RutA subfamily.

It carries out the reaction uracil + FMNH2 + NADH + O2 = (Z)-3-ureidoacrylate + FMN + NAD(+) + H2O + H(+). The catalysed reaction is thymine + FMNH2 + NADH + O2 = (Z)-2-methylureidoacrylate + FMN + NAD(+) + H2O + H(+). Functionally, catalyzes the pyrimidine ring opening between N-3 and C-4 by an unusual flavin hydroperoxide-catalyzed mechanism, adding oxygen atoms in the process to yield ureidoacrylate peracid, that immediately reacts with FMN forming ureidoacrylate and FMN-N(5)-oxide. The FMN-N(5)-oxide reacts spontaneously with NADH to produce FMN. Requires the flavin reductase RutF to regenerate FMN in vivo. The sequence is that of Pyrimidine monooxygenase RutA from Serratia proteamaculans (strain 568).